A 136-amino-acid polypeptide reads, in one-letter code: Large ribosomal subunit protein bL20 (136 aa).

Belongs to the bacterial ribosomal protein bL20 family.

Functionally, binds directly to 23S ribosomal RNA and is necessary for the in vitro assembly process of the 50S ribosomal subunit. It is not involved in the protein synthesizing functions of that subunit. This is Large ribosomal subunit protein bL20 from Tropheryma whipplei (strain Twist) (Whipple's bacillus).